The primary structure comprises 371 residues: Cytochrome b (371 aa).

4 helical membrane passes run F25–I45, W69–I90, W105–L125, and F170–M190. 2 residues coordinate heme b: H75 and H89. Heme b contacts are provided by H174 and H188. H193 serves as a coordination point for a ubiquinone. The next 4 membrane-spanning stretches (helical) occupy residues N218 to L238, L280 to H300, M312 to T332, and F339 to P358.

The protein belongs to the cytochrome b family. As to quaternary structure, the cytochrome bc1 complex contains 3 respiratory subunits (MT-CYB, CYC1 and UQCRFS1), 2 core proteins (UQCRC1 and UQCRC2) and probably 6 low-molecular weight proteins. Requires heme b as cofactor.

The protein localises to the mitochondrion inner membrane. Component of the ubiquinol-cytochrome c reductase complex (complex III or cytochrome b-c1 complex) that is part of the mitochondrial respiratory chain. The b-c1 complex mediates electron transfer from ubiquinol to cytochrome c. Contributes to the generation of a proton gradient across the mitochondrial membrane that is then used for ATP synthesis. The sequence is that of Cytochrome b (MT-CYB) from Elapsoidea nigra (Usambara garter snake).